A 226-amino-acid polypeptide reads, in one-letter code: Ribonuclease 3 (226 aa).

An RNase III domain is found at 6-128; it reads TKKIQKVLGY…LIGSIYLDSN (123 aa). Glu-41 is a binding site for Mg(2+). Asp-45 is an active-site residue. Mg(2+) contacts are provided by Asn-114 and Glu-117. Glu-117 is a catalytic residue. One can recognise a DRBM domain in the interval 155–225; the sequence is DPKTRLQEYL…AQKALIKLGV (71 aa).

This sequence belongs to the ribonuclease III family. In terms of assembly, homodimer. Mg(2+) is required as a cofactor.

The protein localises to the cytoplasm. The enzyme catalyses Endonucleolytic cleavage to 5'-phosphomonoester.. In terms of biological role, digests double-stranded RNA. Involved in the processing of primary rRNA transcript to yield the immediate precursors to the large and small rRNAs (23S and 16S). Processes some mRNAs, and tRNAs when they are encoded in the rRNA operon. Processes pre-crRNA and tracrRNA of type II CRISPR loci if present in the organism. The sequence is that of Ribonuclease 3 from Buchnera aphidicola subsp. Acyrthosiphon pisum (strain 5A).